A 122-amino-acid chain; its full sequence is Cytochrome b-c1 complex subunit 7-1, mitochondrial (122 aa).

It belongs to the UQCRB/QCR7 family. Component of the ubiquinol-cytochrome c oxidoreductase (cytochrome b-c1 complex, complex III, CIII), a multisubunit enzyme composed of 10 subunits. The complex is composed of 3 respiratory subunits cytochrome b (MT-CYB), cytochrome c1 (CYC1-1 or CYC1-2) and Rieske protein (UCR1-1 or UCR1-2), 2 core protein subunits MPPalpha1 (or MPPalpha2) and MPPB, and 5 low-molecular weight protein subunits QCR7-1 (or QCR7-2), UCRQ-1 (or UCRQ-2), QCR9, UCRY and probably QCR6-1 (or QCR6-2). The complex exists as an obligatory dimer and forms supercomplexes (SCs) in the inner mitochondrial membrane with NADH-ubiquinone oxidoreductase (complex I, CI), resulting in different assemblies (supercomplexes SCI(1)III(2) and SCI(2)III(4)).

The protein localises to the mitochondrion inner membrane. Its function is as follows. Component of the ubiquinol-cytochrome c oxidoreductase, a multisubunit transmembrane complex that is part of the mitochondrial electron transport chain which drives oxidative phosphorylation. The respiratory chain contains 3 multisubunit complexes succinate dehydrogenase (complex II, CII), ubiquinol-cytochrome c oxidoreductase (cytochrome b-c1 complex, complex III, CIII) and cytochrome c oxidase (complex IV, CIV), that cooperate to transfer electrons derived from NADH and succinate to molecular oxygen, creating an electrochemical gradient over the inner membrane that drives transmembrane transport and the ATP synthase. The cytochrome b-c1 complex catalyzes electron transfer from ubiquinol to cytochrome c, linking this redox reaction to translocation of protons across the mitochondrial inner membrane, with protons being carried across the membrane as hydrogens on the quinol. In the process called Q cycle, 2 protons are consumed from the matrix, 4 protons are released into the intermembrane space and 2 electrons are passed to cytochrome c. The chain is Cytochrome b-c1 complex subunit 7-1, mitochondrial (QCR7-1) from Arabidopsis thaliana (Mouse-ear cress).